Reading from the N-terminus, the 389-residue chain is Homoserine O-acetyltransferase (389 aa).

One can recognise an AB hydrolase-1 domain in the interval 63 to 371 (NAVLVLHALT…SSDYGHDGFL (309 aa)). Ser168 (nucleophile) is an active-site residue. Arg240 contributes to the substrate binding site. Active-site residues include Asp334 and His367. Asp368 lines the substrate pocket.

This sequence belongs to the AB hydrolase superfamily. MetX family. Homodimer.

The protein localises to the cytoplasm. It catalyses the reaction L-homoserine + acetyl-CoA = O-acetyl-L-homoserine + CoA. It participates in amino-acid biosynthesis; L-methionine biosynthesis via de novo pathway; O-acetyl-L-homoserine from L-homoserine: step 1/1. Functionally, transfers an acetyl group from acetyl-CoA to L-homoserine, forming acetyl-L-homoserine. This chain is Homoserine O-acetyltransferase, found in Clavibacter michiganensis subsp. michiganensis (strain NCPPB 382).